Reading from the N-terminus, the 288-residue chain is Acetyl-coenzyme A carboxylase carboxyl transferase subunit beta (288 aa).

Residues 34–288 form the CoA carboxyltransferase N-terminal domain; the sequence is LFSKCPACKV…RLLRMHGGVR (255 aa). Zn(2+) is bound by residues Cys-38, Cys-41, Cys-56, and Cys-59. The C4-type zinc finger occupies 38–59; the sequence is CPACKVILYKNDLGLEKTCQHC.

This sequence belongs to the AccD/PCCB family. As to quaternary structure, acetyl-CoA carboxylase is a heterohexamer composed of biotin carboxyl carrier protein (AccB), biotin carboxylase (AccC) and two subunits each of ACCase subunit alpha (AccA) and ACCase subunit beta (AccD). It depends on Zn(2+) as a cofactor.

It is found in the cytoplasm. The enzyme catalyses N(6)-carboxybiotinyl-L-lysyl-[protein] + acetyl-CoA = N(6)-biotinyl-L-lysyl-[protein] + malonyl-CoA. It functions in the pathway lipid metabolism; malonyl-CoA biosynthesis; malonyl-CoA from acetyl-CoA: step 1/1. Its function is as follows. Component of the acetyl coenzyme A carboxylase (ACC) complex. Biotin carboxylase (BC) catalyzes the carboxylation of biotin on its carrier protein (BCCP) and then the CO(2) group is transferred by the transcarboxylase to acetyl-CoA to form malonyl-CoA. In Streptococcus suis (strain 98HAH33), this protein is Acetyl-coenzyme A carboxylase carboxyl transferase subunit beta.